The following is a 223-amino-acid chain: MPARQSFTDLKNLVLCDIGNTHIHFAQNYQLFSSAKEDLKRLGIQKEIFYISVNEENEKALLNCYPNAKNIAGFFHLETDYIGLGIDRQMACLAVNNGVVVDAGSAITIDLVKEGKHLGGCILPGLAQYIHAYKKSAKILEQPFKTLDSLEILPKNTRDAVNYGMILSVISCIQHLAKNQKIYLCGGDAKYLSAFLPHSVCKERLVFDGMEIALKKAGILECK.

17–24 (DIGNTHIH) contributes to the ATP binding site. Residues tyrosine 81 and 85 to 88 (GIDR) each bind substrate. Aspartate 87 functions as the Proton acceptor in the catalytic mechanism. Aspartate 102 contributes to the K(+) binding site. Serine 105 contributes to the ATP binding site. Threonine 157 contacts substrate.

Belongs to the type III pantothenate kinase family. Homodimer. NH4(+) serves as cofactor. The cofactor is K(+).

Its subcellular location is the cytoplasm. It catalyses the reaction (R)-pantothenate + ATP = (R)-4'-phosphopantothenate + ADP + H(+). Its pathway is cofactor biosynthesis; coenzyme A biosynthesis; CoA from (R)-pantothenate: step 1/5. Functionally, catalyzes the phosphorylation of pantothenate (Pan), the first step in CoA biosynthesis. The polypeptide is Type III pantothenate kinase (Helicobacter pylori (strain HPAG1)).